The following is a 1014-amino-acid chain: Regulator of telomere elongation helicase 1 homolog (1014 aa).

A Helicase ATP-binding domain is found at 7–308; the sequence is RGVDVDFPYD…NSADKQFDPE (302 aa). Position 42 to 49 (42 to 49) interacts with ATP; it reads SPTGTGKT. Residues 70-85 show a composition bias toward gly residues; that stretch reads GGGGGGGGGGGGGGGS. Positions 70 to 106 are disordered; that stretch reads GGGGGGGGGGGGGGGSQQPPYGSQPSGSQHSGGSASQ. Low complexity predominate over residues 86-106; sequence QQPPYGSQPSGSQHSGGSASQ. The [4Fe-4S] cluster site is built by C149, C170, C175, and C211. The DEAH box motif lies at 255–258; the sequence is DEAH. Residues 906–930 form a disordered region; that stretch reads SSKKSNITHAPGNSGAIHEKSGGQE.

This sequence belongs to the helicase family. RAD3/XPD subfamily.

It localises to the nucleus. It catalyses the reaction ATP + H2O = ADP + phosphate + H(+). Its function is as follows. A probable ATP-dependent DNA helicase implicated in DNA replication, DNA repair and the maintenance of genomic stability. Acts as an anti-recombinase to counteract toxic recombination and limit crossover during meiosis. Regulates meiotic recombination and crossover homeostasis by physically dissociating strand invasion events and thereby promotes noncrossover repair by meiotic synthesis dependent strand annealing (SDSA) as well as disassembly of D loop recombination intermediates. This chain is Regulator of telomere elongation helicase 1 homolog, found in Oryza sativa subsp. japonica (Rice).